The chain runs to 543 residues: MSFNVNWNSLETDSLRSWTVELLTEALNSGKRPNILASDITIKDLNFGKIAPRFEILEIGELDRDRFRGIFKIDYNGDFHLTLHTKVQANPLKIYSDNSLEKEISASSPFVTPDFLLSSDAFNIPLDLKLSDIKISGIGIIVFSKSKGLTMVFRNDPLDSIKVSSTFDTVQVLATFLQNQIENQIRDLFRETLPTLLHKVSLKYTSSNNTNDIIDNLKDHLSNNVYSNALESLEVENVSPGNLQKLAKIYSSRETLKLNVPKLKRIVQRNHLEKFNKNLNPNLASCLYTNMGLQEYSGFSGVSSSYNSIPVGLIANEDFKKVDEILQEISSIQSKNFKSGSNDHKPAKRRTIKLGKGMRQKKVDMQNVDESTLNSINMSRCATEYCDTLSDVSTVLSDDQHNHIEQPTPLKVFTDTRPPLRNVVYTEGYKCSSPMNSNSSFVGSVGLGNNFFQIASGCAPSASPLRNDLSGQKSVHSHDVKVKVKKSMNRIDVSQINEKLNGGFNNGTSKEAMHNENKAFSHNDPSITPFELPPPPYHQLSRA.

The SMP-LTD domain occupies 1–202 (MSFNVNWNSL…LPTLLHKVSL (202 aa)). The disordered stretch occupies residues 519-543 (AFSHNDPSITPFELPPPPYHQLSRA).

It belongs to the MDM34 family. In terms of assembly, component of the ER-mitochondria encounter structure (ERMES) or MDM complex, composed of MMM1, MDM10, MDM12 and MDM34.

It is found in the mitochondrion outer membrane. Its function is as follows. Component of the ERMES/MDM complex, which serves as a molecular tether to connect the endoplasmic reticulum (ER) and mitochondria. Components of this complex are involved in the control of mitochondrial shape and protein biogenesis, and function in nonvesicular lipid trafficking between the ER and mitochondria. MDM34 is required for the interaction of the ER-resident membrane protein MMM1 and the outer mitochondrial membrane-resident beta-barrel protein MDM10. The polypeptide is Mitochondrial distribution and morphology protein 34 (Clavispora lusitaniae (strain ATCC 42720) (Yeast)).